Consider the following 360-residue polypeptide: A-type ATP synthase subunit C (360 aa).

The protein belongs to the V-ATPase V0D/AC39 subunit family. Has multiple subunits, A(3), B(3), C, D, E, F, G, I and K(x); there may be a few other subunits as well.

Its subcellular location is the cell membrane. Functionally, component of the A-type ATP synthase that produces ATP from ADP in the presence of a proton gradient across the membrane. The sequence is that of A-type ATP synthase subunit C from Methanosarcina mazei (strain ATCC BAA-159 / DSM 3647 / Goe1 / Go1 / JCM 11833 / OCM 88) (Methanosarcina frisia).